The primary structure comprises 304 residues: Insulin-like growth factor-binding protein 2 (304 aa).

An N-terminal signal peptide occupies residues 1-34; the sequence is MLPRLGGPALPLLLPSLLLLLLLGAGGCGPGVRA. The region spanning 36–118 is the IGFBP N-terminal domain; the sequence is VLFRCPPCTP…VTGAGTCEKR (83 aa). 9 disulfides stabilise this stretch: Cys-40-Cys-68, Cys-43-Cys-70, Cys-51-Cys-71, Cys-59-Cys-74, Cys-82-Cys-95, Cys-89-Cys-115, Cys-206-Cys-240, Cys-251-Cys-262, and Cys-264-Cys-285. The 83-residue stretch at 203–285 folds into the Thyroglobulin type-1 domain; that stretch reads RTPCQQELDQ…APTIRGDPEC (83 aa). Positions 280 to 282 match the Cell attachment site motif; it reads RGD.

In terms of assembly, interacts with IGF1. Interacts with IGF2. Interacts (via RGD motif) with integrin alpha5/ITGA5; this interaction induces cell migration, adhesion or apoptosis according to the context. Interacts with PTPRB; this interaction leads to PTPRB dimerization and inactivation. Cleaved by MMP9 leading to release of free IGF2 from IGFBP2-IGF2 complex, which contributes to enhance the motility and the growth of astrocytes. In terms of processing, O-glycosylated. In adults, expressed in brain, testes, ovaries, and kidney. Expression in the adult liver is barely detectable.

It localises to the secreted. In terms of biological role, multifunctional protein that plays a critical role in regulating the availability of IGFs such as IGF1 and IGF2 to their receptors and thereby regulates IGF-mediated cellular processes including proliferation, differentiation, and apoptosis in a cell-type specific manner. Functions coordinately with receptor protein tyrosine phosphatase beta/PTPRB and the IGF1 receptor to regulate IGF1-mediated signaling by stimulating the phosphorylation of PTEN leading to its inactivation and AKT1 activation. Plays a positive role in cell migration via interaction with integrin alpha5/ITGA5 through an RGD motif. Additionally, interaction with ITGA5/ITGB1 enhances the adhesion of endothelial progenitor cells to endothelial cells. Upon mitochondrial damage, facilitates apoptosis with ITGA5 of podocytes, and then activates the phosphorylation of focal adhesion kinase (FAK)-mediated mitochondrial injury. This chain is Insulin-like growth factor-binding protein 2 (Igfbp2), found in Rattus norvegicus (Rat).